Reading from the N-terminus, the 707-residue chain is Elongation factor G (707 aa).

The region spanning 9–293 (HDVRNIGIMA…GVVDYLPSPE (285 aa)) is the tr-type G domain. GTP contacts are provided by residues 18-25 (AHIDAGKT), 90-94 (DTPGH), and 144-147 (NKMD).

This sequence belongs to the TRAFAC class translation factor GTPase superfamily. Classic translation factor GTPase family. EF-G/EF-2 subfamily.

It is found in the cytoplasm. Catalyzes the GTP-dependent ribosomal translocation step during translation elongation. During this step, the ribosome changes from the pre-translocational (PRE) to the post-translocational (POST) state as the newly formed A-site-bound peptidyl-tRNA and P-site-bound deacylated tRNA move to the P and E sites, respectively. Catalyzes the coordinated movement of the two tRNA molecules, the mRNA and conformational changes in the ribosome. This is Elongation factor G from Bifidobacterium longum (strain DJO10A).